Reading from the N-terminus, the 407-residue chain is MANAIHVTSEIGKLKTVMLHRPGKEIENITPDSMERLLFDDIPYLPIAQKEHDFFAKTLTDQGIEVIYFEKLAADALSDDGVRKEFLNRMIAESGYAVGVIHDALMEYLYAMDPQMMINQIIEGVRASDVNIVTPDLQSVSENTDWPFLMDPMPNAYFTRDPQASIGDGLSINKMTFEARMRESLITEYIMNYNPRFAGKVKVWRDRNHRTHIEGGDELVLNDHVLAIGISQRTTANAIEDIARNLFKDSNYDTIIAISIPHNHAMMHLDTVFTMINYEQFTVHPAILTGDGKVDNWVLHPGKDGEITMEHHTDIKEVLKKALNKSEIDLIPTGNGDPIVAPREQWNDGSNTLSIAPGVVVTYDRNYVSNDLLRQHGILVHEVRSSELSRGRGGPRCMSCPIVREDI.

The active-site Amidino-cysteine intermediate is the Cys397.

This sequence belongs to the arginine deiminase family.

The protein localises to the cytoplasm. It catalyses the reaction L-arginine + H2O = L-citrulline + NH4(+). The protein operates within amino-acid degradation; L-arginine degradation via ADI pathway; carbamoyl phosphate from L-arginine: step 1/2. The protein is Arginine deiminase of Pediococcus pentosaceus (strain ATCC 25745 / CCUG 21536 / LMG 10740 / 183-1w).